Consider the following 98-residue polypeptide: NADH-ubiquinone oxidoreductase chain 4L (98 aa).

The next 3 helical transmembrane spans lie at 1 to 21 (MSLV…GLLM), 29 to 49 (SLLC…LMIL), and 61 to 81 (IILL…LVMV).

Belongs to the complex I subunit 4L family. Core subunit of respiratory chain NADH dehydrogenase (Complex I) which is composed of 45 different subunits.

It is found in the mitochondrion inner membrane. The enzyme catalyses a ubiquinone + NADH + 5 H(+)(in) = a ubiquinol + NAD(+) + 4 H(+)(out). Core subunit of the mitochondrial membrane respiratory chain NADH dehydrogenase (Complex I) which catalyzes electron transfer from NADH through the respiratory chain, using ubiquinone as an electron acceptor. Part of the enzyme membrane arm which is embedded in the lipid bilayer and involved in proton translocation. This Capra hircus (Goat) protein is NADH-ubiquinone oxidoreductase chain 4L (MT-ND4L).